The chain runs to 365 residues: MKKQNVRTLSLIACTFTYLLVGAAVFDALESDHEMREEEKLKAEEIRIRGKYNISTEDYRQLELVILQSEPHRAGVQWKFAGSFYFAITVITTIGYGHAAPGTDAGKAFCMFYAVLGIPLTLVMFQSLGERMNTFVRYLLKRIKKCCGMRNTEVSMENMVTVGFFSCMGTLCIGAAAFSQCEEWSFFHAYYYCFITLTTIGFGDYVALQSKGALQRKPFYVAFSFMYILVGLTVIGAFLNLVVLRFLTMNSDEERGEGEEGAALPGNPSSVVTHISEEARQVRQRYRGEGGDLQSVCSCACYRSQPQNFGATLAPQPLHSISCRIEEISPSTLKNSLFPSPISSVSPGLHSFGDNHRLMLRRKSV.

Over 1-8 (MKKQNVRT) the chain is Cytoplasmic. Residues 9–29 (LSLIACTFTYLLVGAAVFDAL) traverse the membrane as a helical segment. At 30 to 88 (ESDHEMREEEKLKAEEIRIRGKYNISTEDYRQLELVILQSEPHRAGVQWKFAGSFYFAI) the chain is on the extracellular side. N-linked (GlcNAc...) asparagine glycosylation is present at N53. An intramembrane region (pore-forming) is located at residues 89-101 (TVITTIGYGHAAP). K(+) is bound by residues T93, I94, G95, and Y96. Positions 93-98 (TIGYGH) are selectivity filter 1. The Extracellular segment spans residues 102–107 (GTDAGK). The chain crosses the membrane as a helical span at residues 108–128 (AFCMFYAVLGIPLTLVMFQSL). Residues 129–158 (GERMNTFVRYLLKRIKKCCGMRNTEVSMEN) are Cytoplasmic-facing. A helical transmembrane segment spans residues 159–179 (MVTVGFFSCMGTLCIGAAAFS). Over 180–194 (QCEEWSFFHAYYYCF) the chain is Extracellular. Positions 195–207 (ITLTTIGFGDYVA) form an intramembrane region, pore-forming. Positions 199, 200, 201, and 202 each coordinate K(+). The interval 199-204 (TIGFGD) is selectivity filter 2. Topologically, residues 208-218 (LQSKGALQRKP) are extracellular. A helical transmembrane segment spans residues 219-239 (FYVAFSFMYILVGLTVIGAFL). Residues 240-365 (NLVVLRFLTM…HRLMLRRKSV (126 aa)) are Cytoplasmic-facing. The segment at 243–248 (VLRFLT) is X-gate.

It belongs to the two pore domain potassium channel (TC 1.A.1.8) family. As to quaternary structure, homodimer. Heterodimer with KCNK1. Heterodimer with KCNK3. As to expression, highly expressed in the brain.

Its subcellular location is the cell membrane. The protein localises to the mitochondrion inner membrane. It is found in the cell projection. The protein resides in the dendrite. It carries out the reaction K(+)(in) = K(+)(out). The enzyme catalyses Na(+)(in) = Na(+)(out). With respect to regulation, inhibited by extracellular acidification. In terms of biological role, k(+) channel that conducts voltage-dependent outward rectifying currents upon membrane depolarization. Voltage sensing is coupled to K(+) electrochemical gradient in an 'ion flux gating' mode where outward but not inward ion flow opens the gate. Changes ion selectivity and becomes permeable to Na(+) ions in response to extracellular acidification. Protonation of the pH sensor His-98 stabilizes C-type inactivation conformation likely converting the channel from outward K(+)-conducting, to inward Na(+)-conducting to nonconductive state. Homo- and heterodimerizes to form functional channels with distinct regulatory and gating properties. Allows K(+) currents with fast-gating kinetics important for the repolarization and hyperpolarization phases of action potentials. In granule neurons, hyperpolarizes the resting membrane potential to limit intrinsic neuronal excitability, but once the action potential threshold is reached, supports high-frequency action potential firing and increased neuronal excitability. Homomeric and/or heteromeric KCNK3:KCNK9 channels operate in cerebellar granule cells, whereas heteromeric KCNK1:KCNK9 enables currents in hippocampal dentate gyrus granule neurons. Dispensable for central chemosensory respiration i.e. breathing controlled by brainstem CO2/pH, it rather conducts pH-sensitive currents and controls the firing rate of serotonergic raphe neurons involved in potentiation of the respiratory chemoreflex. In retinal ganglion cells, mediates outward rectifying currents that regulate action potentials in response to acidification of the synaptic cleft. Involved in transmission of image-forming and nonimage-forming visual information in the retina. In adrenal gland, contributes to the maintenance of a hyperpolarized resting membrane potential of aldosterone-producing cells at zona glomerulosa and limits aldosterone release as part of a regulatory mechanism that controls arterial blood pressure and electrolyte homeostasis. In Cavia porcellus (Guinea pig), this protein is Potassium channel subfamily K member 9 (KCNK9).